The chain runs to 86 residues: Exodeoxyribonuclease 7 small subunit (86 aa).

Residues 67-86 (LSDPAQPEASEPFDPPSHDG) are disordered.

The protein belongs to the XseB family. Heterooligomer composed of large and small subunits.

The protein localises to the cytoplasm. The catalysed reaction is Exonucleolytic cleavage in either 5'- to 3'- or 3'- to 5'-direction to yield nucleoside 5'-phosphates.. Functionally, bidirectionally degrades single-stranded DNA into large acid-insoluble oligonucleotides, which are then degraded further into small acid-soluble oligonucleotides. This chain is Exodeoxyribonuclease 7 small subunit, found in Stenotrophomonas maltophilia (strain K279a).